Consider the following 191-residue polypeptide: MYVVLEGVDGAGKSTQVGLLKNKFKNALFTKEPGGTKIGESLRRIALNENISELARAFLFLSDRAEHVESVIKPALKEKKLIISDRSLISGMAYSEFSSLELNLLATQSILPTKIVLLLIDKEGLKQRLSLKSLDKIENQGIEKLLTIQRNLKTHAYALREKFGCKVLELNAKESVKNLHEKIAAFIKCVV.

An ATP-binding site is contributed by 7 to 14 (GVDGAGKS).

This sequence belongs to the thymidylate kinase family.

It catalyses the reaction dTMP + ATP = dTDP + ADP. Phosphorylation of dTMP to form dTDP in both de novo and salvage pathways of dTTP synthesis. The sequence is that of Thymidylate kinase from Helicobacter pylori (strain P12).